The chain runs to 441 residues: MDLNKEWEKVQEMAFTSWVNSVLEKRGCDKISDVSTDLSDGVKLIYFLESVSGKKFPKKFDLEPKTRIMRVQNLHLAMLFIDEDLKIKVQGVAAEEFVDNNKKMILGFLWTLYRKYRISVINEGDKSSEEGLLAWCKKTTEGYNNVNITGFKSSFRDGHGFLALAHKYDPTVFKYDEYEGHDNIARLNAAFDFAEKGLGIPKLLEAESLSKGNVDERSIVLYTSLFFHAFRAKEEREALEASQNSLNNKLASLEQSLEGEKHSQEELVKQKKDLEDALNKIREQNDNRNSRITDLQSKIDDALRGLDDEKLAKLDLESRLAKCEKDKAILELKLAEILDEKDRLEKKIDEDKKRAEAERLGLGLIRQHLAAQFSDIHKWQSFLEHPETVPYTGTPVDLDSELSSLSFEEQAKKLASKLESENILIEKYLNGKEEAKAAAKK.

Residues 1–229 (MDLNKEWEKV…VLYTSLFFHA (229 aa)) form an actin-binding region. Calponin-homology (CH) domains follow at residues 9 to 117 (KVQE…RKYR) and 126 to 231 (KSSE…HAFR). Coiled-coil stretches lie at residues 229–362 (AFRA…RLGL) and 406–430 (SFEEQAKKLASKLESENILIEKYLN).

The protein belongs to the cortexillin family. In terms of assembly, homodimer; parallel.

It is found in the cytoplasm. It localises to the cytoskeleton. Actin-bundling protein. When linked to F-actin the actin filaments form preferentially anti-parallel bundles that associate into meshworks. Plays a major role in cytokinesis. Negatively regulates cortical localization of rapgap1. This is Cortexillin-2 (ctxB) from Dictyostelium discoideum (Social amoeba).